The sequence spans 142 residues: Hemoglobin subunit alpha-5 (142 aa).

A Globin domain is found at 2–142 (TFSSAEKAAI…VSAVLVSKYR (141 aa)). His59 contacts O2. His88 contributes to the heme b binding site.

This sequence belongs to the globin family. Heterotetramer of two alpha chains and two beta chains. In terms of tissue distribution, red blood cells.

Its function is as follows. This is a larval (tadpole) alpha-globin. This Xenopus laevis (African clawed frog) protein is Hemoglobin subunit alpha-5 (hba5).